The following is a 132-amino-acid chain: Protein C10 (132 aa).

A2 is modified (N-acetylalanine).

Belongs to the UPF0456 family.

It is found in the cytoplasm. Its function is as follows. In brain, may be required for corpus callosum development. The protein is Protein C10 of Bos taurus (Bovine).